The primary structure comprises 799 residues: Elongation factor G, mitochondrial (799 aa).

The N-terminal 33 residues, 1 to 33 (MRSPSLARLQTRAVFGLTRSARFQPQTLLRQRC), are a transit peptide targeting the mitochondrion. The tr-type G domain occupies 97-384 (DKCRNIGIAA…GVIDYLPNPA (288 aa)). GTP is bound by residues 106–113 (AHIDSGKT), 182–186 (DTPGH), and 236–239 (NKMD).

This sequence belongs to the TRAFAC class translation factor GTPase superfamily. Classic translation factor GTPase family. EF-G/EF-2 subfamily.

It localises to the mitochondrion. It participates in protein biosynthesis; polypeptide chain elongation. Its function is as follows. Mitochondrial GTPase that catalyzes the GTP-dependent ribosomal translocation step during translation elongation. During this step, the ribosome changes from the pre-translocational (PRE) to the post-translocational (POST) state as the newly formed A-site-bound peptidyl-tRNA and P-site-bound deacylated tRNA move to the P and E sites, respectively. Catalyzes the coordinated movement of the two tRNA molecules, the mRNA and conformational changes in the ribosome. This is Elongation factor G, mitochondrial (mef1) from Penicillium rubens (strain ATCC 28089 / DSM 1075 / NRRL 1951 / Wisconsin 54-1255) (Penicillium chrysogenum).